Reading from the N-terminus, the 340-residue chain is Glycerol-3-phosphate dehydrogenase [NAD(P)+] (340 aa).

3 residues coordinate NADPH: Ser14, Trp15, and Lys109. Sn-glycerol 3-phosphate is bound by residues Lys109, Gly140, and Ser142. Ala144 lines the NADPH pocket. Sn-glycerol 3-phosphate-binding residues include Lys195, Asp248, Ser258, Arg259, and Asn260. Residue Lys195 is the Proton acceptor of the active site. Arg259 is a binding site for NADPH. Val283 and Glu285 together coordinate NADPH.

The protein belongs to the NAD-dependent glycerol-3-phosphate dehydrogenase family.

It localises to the cytoplasm. It catalyses the reaction sn-glycerol 3-phosphate + NAD(+) = dihydroxyacetone phosphate + NADH + H(+). The catalysed reaction is sn-glycerol 3-phosphate + NADP(+) = dihydroxyacetone phosphate + NADPH + H(+). The protein operates within membrane lipid metabolism; glycerophospholipid metabolism. Catalyzes the reduction of the glycolytic intermediate dihydroxyacetone phosphate (DHAP) to sn-glycerol 3-phosphate (G3P), the key precursor for phospholipid synthesis. The sequence is that of Glycerol-3-phosphate dehydrogenase [NAD(P)+] from Syntrophobacter fumaroxidans (strain DSM 10017 / MPOB).